A 179-amino-acid chain; its full sequence is Calcineurin subunit B type 2 (179 aa).

The N-myristoyl glycine moiety is linked to residue glycine 2. 4 consecutive EF-hand domains span residues glutamate 18–proline 53, arginine 57–lysine 85, aspartate 87–asparagine 122, and glutamine 128–histidine 163. Residues aspartate 31, aspartate 33, serine 35, serine 37, glutamate 42, aspartate 63, aspartate 65, asparagine 67, glutamate 69, glutamate 74, aspartate 100, aspartate 102, aspartate 104, and glutamate 111 each coordinate Ca(2+). The calcineurin A binding stretch occupies residues glutamine 131–serine 136. Positions 141, 143, 145, 147, and 152 each coordinate Ca(2+).

This sequence belongs to the calcineurin regulatory subunit family. Forms a complex composed of a calmodulin-dependent catalytic subunit (also known as calcineurin A) and a regulatory Ca(2+)-binding subunit (also known as calcineurin B). There are three catalytic subunits, each encoded by a separate gene (PPP3CA, PPP3CB, and PPP3CC) and two regulatory subunits which are also encoded by separate genes (PPP3R1 and PPP3R2). Interacts with SPATA33 (via PQIIIT motif). In terms of tissue distribution, expressed in osteoblasts and bone marrow (at protein level). Expressed in the testis. Expressed in the sperm midpiece in a SPATA33-dependent manner (at protein level).

The protein resides in the mitochondrion. Regulatory subunit of calcineurin, a calcium-dependent, calmodulin stimulated protein phosphatase. Confers calcium sensitivity. In Mus musculus (Mouse), this protein is Calcineurin subunit B type 2 (Ppp3r2).